The chain runs to 597 residues: DNA ligase (597 aa).

E262 provides a ligand contact to ATP. The active-site N6-AMP-lysine intermediate is the K264. The ATP site is built by R269, R284, E314, F354, R431, and K437.

Belongs to the ATP-dependent DNA ligase family. The cofactor is Mg(2+). It depends on Mn(2+) as a cofactor.

It carries out the reaction ATP + (deoxyribonucleotide)n-3'-hydroxyl + 5'-phospho-(deoxyribonucleotide)m = (deoxyribonucleotide)n+m + AMP + diphosphate.. The catalysed reaction is ADP + (deoxyribonucleotide)n-3'-hydroxyl + 5'-phospho-(deoxyribonucleotide)m = (deoxyribonucleotide)n+m + AMP + phosphate.. It catalyses the reaction GTP + (deoxyribonucleotide)n-3'-hydroxyl + 5'-phospho-(deoxyribonucleotide)m = (deoxyribonucleotide)n+m + GMP + diphosphate.. Inhibited by Ca(2+) and Zn(2+). In terms of biological role, DNA ligase that seals nicks in double-stranded DNA during DNA replication, DNA recombination and DNA repair. Can use both ATP and ADP. In Staphylothermus marinus (strain ATCC 43588 / DSM 3639 / JCM 9404 / F1), this protein is DNA ligase.